The following is a 295-amino-acid chain: Small ribosomal subunit protein uS2 (295 aa).

The protein belongs to the universal ribosomal protein uS2 family.

This Rickettsia typhi (strain ATCC VR-144 / Wilmington) protein is Small ribosomal subunit protein uS2.